The primary structure comprises 635 residues: Probable monoacyl phosphatidylinositol tetramannoside-binding protein LpqW (635 aa).

The signal sequence occupies residues 1 to 26 (MGVPSPVRRVCVTVGALVALACMVLA). Disordered regions lie at residues 32–52 (PPPA…PRRP), 389–412 (NTSV…GPPE), and 511–551 (NAPT…LVKA). Composition is skewed to low complexity over residues 390–411 (TSVS…TGPP) and 511–531 (NAPT…APDT).

This sequence belongs to the bacterial solute-binding protein 5 family.

It participates in phospholipid metabolism; phosphatidylinositol metabolism. Its function is as follows. May directly or indirectly regulate the accessibility of the key branch point intermediate, monoacyl phosphatidylinositol tetramannoside (AcPIM4), to the elongating alpha-1,6 mannosyltransferases which could regulate the lipoarabinomannans (LAMs) biosynthesis. This Mycobacterium tuberculosis (strain CDC 1551 / Oshkosh) protein is Probable monoacyl phosphatidylinositol tetramannoside-binding protein LpqW (lpqW).